The primary structure comprises 1184 residues: DNA polymerase III subunit alpha (1184 aa).

Belongs to the DNA polymerase type-C family. DnaE subfamily. As to quaternary structure, the Pol III holoenzyme complex contains at least 10 different subunits organized into 3 functionally essential subassemblies: the Pol III core, the beta sliding clamp processivity factor and the clamp-loading complex. The Pol III core (subunits alpha, epsilon and theta) contains the polymerase and the 3'-5' exonuclease proofreading activities. The polymerase is tethered to the template via the dimeric beta sliding clamp processivity factor. The clamp loader (also called gamma complex) assembles the beta sliding clamp onto the primed template and plays a central role in the organization and communication at the replication fork. The clamp-loading complex contains delta, delta', psi and chi, and 3 copies of either or both of two different DnaX proteins, gamma and tau. The DNA replisome complex has a single clamp loader (3 tau and 1 each of delta, delta', psi and chi subunits) which binds 3 Pol III cores (1 core on the leading strand and 2 on the lagging strand) each with a beta sliding clamp dimer. Interacts with the beta-sliding clamp (DnaN). Co-immunoprecipitates with DarG in the presence and absence of darT.

Its subcellular location is the cytoplasm. The catalysed reaction is DNA(n) + a 2'-deoxyribonucleoside 5'-triphosphate = DNA(n+1) + diphosphate. Functionally, DNA polymerase III is a complex, multichain enzyme responsible for most of the replicative synthesis in bacteria. Pol III also exhibits 3' to 5' exonuclease activity. The alpha chain is the DNA polymerase. This is DNA polymerase III subunit alpha (dnaE1) from Mycobacterium tuberculosis (strain ATCC 25618 / H37Rv).